We begin with the raw amino-acid sequence, 179 residues long: Deoxyuridine 5'-triphosphate nucleotidohydrolase, mitochondrial (179 aa).

The transit peptide at 1–41 (MPIEQKYFSLFSNLFKRLTTNNNNNNYLKMAPPNFETFKVK) directs the protein to the mitochondrion. Residues 97 to 99 (RSG), 111 to 114 (GVID), glycine 122, arginine 165, and 170 to 171 (FG) each bind dUTP.

It belongs to the dUTPase family. Homotrimer. Mg(2+) is required as a cofactor.

It is found in the mitochondrion. The enzyme catalyses dUTP + H2O = dUMP + diphosphate + H(+). Its pathway is pyrimidine metabolism; dUMP biosynthesis; dUMP from dCTP (dUTP route): step 2/2. Functionally, this enzyme is involved in nucleotide metabolism: it produces dUMP, the immediate precursor of thymidine nucleotides and it decreases the intracellular concentration of dUTP so that uracil cannot be incorporated into DNA. The sequence is that of Deoxyuridine 5'-triphosphate nucleotidohydrolase, mitochondrial (dut) from Dictyostelium discoideum (Social amoeba).